A 253-amino-acid chain; its full sequence is DNA repair protein RecO (253 aa).

The protein belongs to the RecO family.

Its function is as follows. Involved in DNA repair and RecF pathway recombination. This chain is DNA repair protein RecO, found in Streptococcus agalactiae serotype Ia (strain ATCC 27591 / A909 / CDC SS700).